Reading from the N-terminus, the 101-residue chain is Urease subunit beta (101 aa).

It belongs to the urease beta subunit family. In terms of assembly, heterotrimer of UreA (gamma), UreB (beta) and UreC (alpha) subunits. Three heterotrimers associate to form the active enzyme.

It is found in the cytoplasm. It carries out the reaction urea + 2 H2O + H(+) = hydrogencarbonate + 2 NH4(+). Its pathway is nitrogen metabolism; urea degradation; CO(2) and NH(3) from urea (urease route): step 1/1. The protein is Urease subunit beta of Cereibacter sphaeroides (strain ATCC 17029 / ATH 2.4.9) (Rhodobacter sphaeroides).